Reading from the N-terminus, the 366-residue chain is Quinolinate synthase (366 aa).

Residues H44 and S61 each contribute to the iminosuccinate site. Position 108 (C108) interacts with [4Fe-4S] cluster. Iminosuccinate is bound by residues 139–141 and S160; that span reads YIN. C228 is a [4Fe-4S] cluster binding site. Iminosuccinate contacts are provided by residues 254 to 256 and T271; that span reads HPE. C318 is a [4Fe-4S] cluster binding site.

Belongs to the quinolinate synthase family. Type 3 subfamily. It depends on [4Fe-4S] cluster as a cofactor.

It localises to the cytoplasm. It catalyses the reaction iminosuccinate + dihydroxyacetone phosphate = quinolinate + phosphate + 2 H2O + H(+). It functions in the pathway cofactor biosynthesis; NAD(+) biosynthesis; quinolinate from iminoaspartate: step 1/1. Catalyzes the condensation of iminoaspartate with dihydroxyacetone phosphate to form quinolinate. This is Quinolinate synthase from Listeria monocytogenes serotype 4b (strain F2365).